A 212-amino-acid polypeptide reads, in one-letter code: Thymidylate kinase (212 aa).

10–17 (GPDGAGKS) is an ATP binding site.

This sequence belongs to the thymidylate kinase family.

The catalysed reaction is dTMP + ATP = dTDP + ADP. Phosphorylation of dTMP to form dTDP in both de novo and salvage pathways of dTTP synthesis. The chain is Thymidylate kinase from Lactobacillus helveticus (strain DPC 4571).